The following is a 737-amino-acid chain: Phosphoribosylformylglycinamidine synthase subunit PurL (737 aa).

Histidine 50 is a catalytic residue. Residues tyrosine 53 and lysine 92 each coordinate ATP. Position 94 (glutamate 94) interacts with Mg(2+). Substrate contacts are provided by residues 95 to 98 and arginine 117; that span reads SHNH. Catalysis depends on histidine 96, which acts as the Proton acceptor. Aspartate 118 is a Mg(2+) binding site. Glutamine 241 lines the substrate pocket. A Mg(2+)-binding site is contributed by aspartate 269. 313-315 contacts substrate; the sequence is ESQ. Positions 495 and 532 each coordinate ATP. Asparagine 533 is a Mg(2+) binding site. Serine 535 is a substrate binding site.

It belongs to the FGAMS family. As to quaternary structure, monomer. Part of the FGAM synthase complex composed of 1 PurL, 1 PurQ and 2 PurS subunits.

It localises to the cytoplasm. The enzyme catalyses N(2)-formyl-N(1)-(5-phospho-beta-D-ribosyl)glycinamide + L-glutamine + ATP + H2O = 2-formamido-N(1)-(5-O-phospho-beta-D-ribosyl)acetamidine + L-glutamate + ADP + phosphate + H(+). It participates in purine metabolism; IMP biosynthesis via de novo pathway; 5-amino-1-(5-phospho-D-ribosyl)imidazole from N(2)-formyl-N(1)-(5-phospho-D-ribosyl)glycinamide: step 1/2. Part of the phosphoribosylformylglycinamidine synthase complex involved in the purines biosynthetic pathway. Catalyzes the ATP-dependent conversion of formylglycinamide ribonucleotide (FGAR) and glutamine to yield formylglycinamidine ribonucleotide (FGAM) and glutamate. The FGAM synthase complex is composed of three subunits. PurQ produces an ammonia molecule by converting glutamine to glutamate. PurL transfers the ammonia molecule to FGAR to form FGAM in an ATP-dependent manner. PurS interacts with PurQ and PurL and is thought to assist in the transfer of the ammonia molecule from PurQ to PurL. This chain is Phosphoribosylformylglycinamidine synthase subunit PurL, found in Bartonella bacilliformis (strain ATCC 35685 / KC583 / Herrer 020/F12,63).